Here is a 519-residue protein sequence, read N- to C-terminus: FAD-dependent monooxygenase macF (519 aa).

The signal sequence occupies residues 1 to 20 (MTKMTSIIGILMGVLTTATA). The region spanning 88 to 262 (CRLNASCIVT…TEYDLTTNTG (175 aa)) is the FAD-binding PCMH-type domain. H125 is modified (pros-8alpha-FAD histidine).

The protein belongs to the oxygen-dependent FAD-linked oxidoreductase family.

It functions in the pathway secondary metabolite biosynthesis; terpenoid biosynthesis. In terms of biological role, FAD-dependent monooxygenase; part of the gene cluster that mediates the biosynthesis of macrophorins, isoprenoid epoxycyclohexenones containing cyclized drimane moieties. The first step of the pathway is the synthesis of 6-methylsalicylic acid (6-MSA) by the polyketide synthase macA. 6-MSA is then converted to m-cresol by the decarboxylase macB. The cytochrome P450 monooxygenase macC then catalyzes the oxidation of m-cresol to toluquinol. Epoxidation of toluquinol is then performed by the short chain dehydrogenase macD, with the help of macE, and a further prenylation by macG leads to 7-deacetoxyyanuthone A. The next step is the hydroxylation of C-22 of 7-deacetoxyyanuthone A by the cytochrome P450 monooxygenase macH to yield 22-deacetylyanuthone A. O-Mevalon transferase macI then attaches mevalon to the hydroxyl group of 22-deacetylyanuthone A to produce yanuthone E. The terpene cyclase macJ catalyzes the cyclization of 22-deacetylyanuthone A to macrophorin A. MacJ is also able to catalyze cyclization of yanuthone E and 7-deacetoxyyanuthone A to their corresponding macrophorins. The macJ products can be further modified by macH and macJ, as well as by the FAD-dependent monooxygenase macF, to produce additional macrophorins, including 4'-oxomacrophorin A, 4'-oxomacrophorin D and 4'-oxomacrophorin E. This chain is FAD-dependent monooxygenase macF, found in Penicillium terrestre.